The following is a 310-amino-acid chain: MSSSTQIRPIAVVGPTASGKTAISLELAKLLDGEVVNIDSMQLYRGMDIGTAKVPPEERQGIPHHQLDIWPVTKPASVAEYRSGAIATVEEILSRGKMPIIVGGSMMYIQALVDEWDFPPTDPIVREKWQRELDVRGVAAMHQYLATIDPEAARIIEDNDPRRTVRALEVIELTGKPFAASQPPKNSTPRWNMRLLGLSAPAEWLNPRIEQRVRQMFDQGLVEEVRSLVADGLARTSTAGQAIGYAQVLDYFAGELTFEEAVDRTITGTRRYARRQRSWFRRDKRIIWIDANSPDPVRAATEALGIVSQQ.

ATP is bound at residue 14-21 (GPTASGKT). 16-21 (TASGKT) is a binding site for substrate. Positions 39 to 42 (DSMQ) are interaction with substrate tRNA.

It belongs to the IPP transferase family. Monomer. Mg(2+) serves as cofactor.

The enzyme catalyses adenosine(37) in tRNA + dimethylallyl diphosphate = N(6)-dimethylallyladenosine(37) in tRNA + diphosphate. Catalyzes the transfer of a dimethylallyl group onto the adenine at position 37 in tRNAs that read codons beginning with uridine, leading to the formation of N6-(dimethylallyl)adenosine (i(6)A). This is tRNA dimethylallyltransferase from Corynebacterium jeikeium (strain K411).